A 627-amino-acid polypeptide reads, in one-letter code: Polyadenylate-binding protein, cytoplasmic and nuclear (627 aa).

The span at 1–11 (MSAADANQVQE) shows a compositional bias: polar residues. A disordered region spans residues 1–46 (MSAADANQVQESLEKLNLDSAPVASTEETEQTASGETEEAADSAQV). RRM domains are found at residues 51 to 129 (ASLY…WSQR), 139 to 216 (GNIF…KHIS), 232 to 309 (TNVY…RAQK), and 335 to 412 (VNLF…LAQR). A compositionally biased stretch (low complexity) spans 511-535 (DFNNGANGGRQQRGYYPNRNQNQKG). The tract at residues 511–537 (DFNNGANGGRQQRGYYPNRNQNQKGRQ) is disordered. Residues 537–618 (QQKDLAAIIA…ALTAFEEYKK (82 aa)) form the PABC domain.

Belongs to the polyadenylate-binding protein type-1 family.

Its subcellular location is the cytoplasm. It localises to the nucleus. Its function is as follows. Binds the poly(A) tail of mRNA. Appears to be an important mediator of the multiple roles of the poly(A) tail in mRNA biogenesis, stability and translation. In the nucleus, involved in both mRNA cleavage and polyadenylation. Is also required for efficient mRNA export to the cytoplasm. Acts in concert with a poly(A)-specific nuclease (PAN) to affect poly(A) tail shortening, which may occur concomitantly with either nucleocytoplasmic mRNA transport or translational initiation. In the cytoplasm, stimulates translation initiation and regulates mRNA decay through translation termination-coupled poly(A) shortening, probably mediated by PAN. This Debaryomyces hansenii (strain ATCC 36239 / CBS 767 / BCRC 21394 / JCM 1990 / NBRC 0083 / IGC 2968) (Yeast) protein is Polyadenylate-binding protein, cytoplasmic and nuclear (PAB1).